Reading from the N-terminus, the 357-residue chain is Serine protease 1 (357 aa).

Positions methionine 1–alanine 29 are cleaved as a signal peptide. The propeptide occupies aspartate 30–glutamate 170. Cysteine 184 and cysteine 204 are joined by a disulfide. Active-site charge relay system residues include histidine 203, aspartate 232, and serine 313. Cysteine 307 and cysteine 333 are joined by a disulfide.

The protein belongs to the peptidase S1 family.

It is found in the secreted. Its function is as follows. Serine protease that preferentially cleaves peptide bonds on the C-terminal side of aspartate and glutamate with a 10-fold higher reactivity for a glutamyl bond than an aspartyl bond. In Streptomyces fradiae (Streptomyces roseoflavus), this protein is Serine protease 1.